The sequence spans 142 residues: Nucleoside diphosphate kinase (142 aa).

ATP is bound by residues Lys11, Phe59, Arg87, Thr93, Arg104, and Asn114. His117 functions as the Pros-phosphohistidine intermediate in the catalytic mechanism.

It belongs to the NDK family. As to quaternary structure, homotetramer. It depends on Mg(2+) as a cofactor.

Its subcellular location is the cytoplasm. It catalyses the reaction a 2'-deoxyribonucleoside 5'-diphosphate + ATP = a 2'-deoxyribonucleoside 5'-triphosphate + ADP. The catalysed reaction is a ribonucleoside 5'-diphosphate + ATP = a ribonucleoside 5'-triphosphate + ADP. Its function is as follows. Major role in the synthesis of nucleoside triphosphates other than ATP. The ATP gamma phosphate is transferred to the NDP beta phosphate via a ping-pong mechanism, using a phosphorylated active-site intermediate. In Pectobacterium atrosepticum (strain SCRI 1043 / ATCC BAA-672) (Erwinia carotovora subsp. atroseptica), this protein is Nucleoside diphosphate kinase.